Reading from the N-terminus, the 89-residue chain is ATP synthase subunit H, mitochondrial (89 aa).

In terms of assembly, F-type ATP synthases have 2 components, the catalytic core F(1) and the membrane-embedded component F(0), linked together by a central stalk and a peripheral stalk. The central stalk, also called rotor shaft, is often seen as part of F(1). The peripheral stalk is seen as part of F(0). F(0) contains the membrane channel next to the rotor. F-type ATP synthases form dimers but each monomer functions independently in ATP generation. The dimer consists of 18 different polypeptides: ATP1 (subunit alpha, part of F(1), 3 molecules per monomer), ATP2 (subunit beta, part of F(1), 3 molecules per monomer), ATP3 (subunit gamma, part of the central stalk), ATP4 (subunit b, part of the peripheral stalk), ATP5/OSCP (subunit 5/OSCP, part of the peripheral stalk), ATP6 (subunit a, part of the peripheral stalk), ATP7 (subunit d, part of the peripheral stalk), ATP8 (subunit 8, part of the peripheral stalk), OLI1 (subunit c, part of the rotor, 10 molecules per monomer), ATP14 (subunit H, part of the peripheral stalk), ATP15 (subunit epsilon, part of the central stalk), ATP16 (subunit delta, part of the central stalk), ATP17 (subunit f, part of the peripheral stalk), ATP18 (subunit i/j, part of the peripheral stalk). Dimer-specific subunits are ATP19 (subunit k, at interface between monomers), ATP20 (subunit g, at interface between monomers), TIM11 (subunit e, at interface between monomers). Also contains subunit L.

It is found in the mitochondrion inner membrane. Its function is as follows. Mitochondrial membrane ATP synthase (F(1)F(0) ATP synthase or Complex V) produces ATP from ADP in the presence of a proton gradient across the membrane which is generated by electron transport complexes of the respiratory chain. F-type ATP synthases consist of two structural domains, F(1) - containing the extramembraneous catalytic core, and F(0) - containing the membrane proton channel, linked together by a central stalk and a peripheral stalk. During catalysis, ATP synthesis in the catalytic domain of F(1) is coupled via a rotary mechanism of the central stalk subunits to proton translocation. Part of the peripheral stalk. The chain is ATP synthase subunit H, mitochondrial from Pichia angusta (Yeast).